Reading from the N-terminus, the 348-residue chain is Chitinase (348 aa).

Residues 1 to 29 (MKLKKIIPAFPLLSTVAVGLWLTPTQASA) form the signal peptide. Positions 42 to 348 (KVLVGYWHNW…FATRYSNLVK (307 aa)) constitute a GH18 domain. Catalysis depends on Glu161, which acts as the Proton donor.

It belongs to the glycosyl hydrolase 18 family.

The protein localises to the secreted. It catalyses the reaction Random endo-hydrolysis of N-acetyl-beta-D-glucosaminide (1-&gt;4)-beta-linkages in chitin and chitodextrins.. Its pathway is glycan degradation; chitin degradation. In terms of biological role, involved in chitin degradation. Catalyzes the cleavage of glycosidic linkages in chitooligosaccharides and in alpha- and beta-chitin. Its activity on chitooligosaccharides increases considerably with degrees of polymerization (the initial rate of hydrolysis for GlcNAc5 is about 130-fold higher than that for GlcNAc3). Its activity is greatly stimulated in the presence of the lytic chitin monooxygenase EfCBM33A, which attacks the crystalline structure of chitin and makes the polymer more accessible to the chitinase; combining the two enzymes leads to rapid and complete depolymerization of crystalline chitin, especially with beta-chitin as a substrate. Is likely involved in a chitin degradation pathway that allows E.faecalis V583 to grow on chitin as a carbon source. This is Chitinase from Enterococcus faecalis (strain ATCC 700802 / V583).